Here is a 237-residue protein sequence, read N- to C-terminus: Cobalt-precorrin-2 C(20)-methyltransferase (237 aa).

This sequence belongs to the precorrin methyltransferase family. In terms of assembly, homodimer.

The catalysed reaction is Co-precorrin-2 + S-adenosyl-L-methionine = Co-precorrin-3 + S-adenosyl-L-homocysteine + H(+). It functions in the pathway cofactor biosynthesis; adenosylcobalamin biosynthesis; cob(II)yrinate a,c-diamide from sirohydrochlorin (anaerobic route): step 2/10. In terms of biological role, methylates cobalt-precorrin-2 at the C-20 position to produce cobalt-precorrin-3A in the anaerobic cobalamin biosynthesis pathway. The chain is Cobalt-precorrin-2 C(20)-methyltransferase (cbiL) from Salmonella typhimurium (strain LT2 / SGSC1412 / ATCC 700720).